Reading from the N-terminus, the 361-residue chain is Chorismate synthase (361 aa).

NADP(+)-binding residues include R48 and R54. Residues 131-133 (RSS), 243-244 (NA), G287, 302-306 (KPTSS), and R328 contribute to the FMN site.

This sequence belongs to the chorismate synthase family. In terms of assembly, homotetramer. FMNH2 serves as cofactor.

The enzyme catalyses 5-O-(1-carboxyvinyl)-3-phosphoshikimate = chorismate + phosphate. It participates in metabolic intermediate biosynthesis; chorismate biosynthesis; chorismate from D-erythrose 4-phosphate and phosphoenolpyruvate: step 7/7. In terms of biological role, catalyzes the anti-1,4-elimination of the C-3 phosphate and the C-6 proR hydrogen from 5-enolpyruvylshikimate-3-phosphate (EPSP) to yield chorismate, which is the branch point compound that serves as the starting substrate for the three terminal pathways of aromatic amino acid biosynthesis. This reaction introduces a second double bond into the aromatic ring system. This chain is Chorismate synthase, found in Rhodopseudomonas palustris (strain HaA2).